The sequence spans 630 residues: Sodium-dependent serotonin transporter (630 aa).

The Cytoplasmic portion of the chain corresponds to 1–87; the sequence is METTPLNSQK…ERETWGKKMD (87 aa). The disordered stretch occupies residues 23-60; it reads ENGVLQKGVPTTADRAEPSQISNGYSAVPSTSAGDEAS. A compositionally biased stretch (polar residues) spans 41 to 55; it reads SQISNGYSAVPSTSA. Y47 bears the Phosphotyrosine mark. A helical transmembrane segment spans residues 88–112; the sequence is FLLSVIGYAVDLGNIWRFPYICYQN. Na(+)-binding residues include G94, A96, V97, D98, and N101. D98 lines the serotonin pocket. Topologically, residues 113–115 are extracellular; sequence GGG. The chain crosses the membrane as a helical span at residues 116-135; that stretch reads AFLLPYTIMAIFGGIPLFYM. Residues 136–160 lie on the Cytoplasmic side of the membrane; the sequence is ELALGQYHRNGCISIWRKICPIFKG. Y142 is modified (phosphotyrosine). A helical membrane pass occupies residues 161 to 186; the sequence is IGYAICIIAFYIASYYNTIIAWALYY. Residues 187–252 lie on the Extracellular side of the membrane; that stretch reads LISSLTDRLP…KGLQDLGTIS (66 aa). Cysteines 200 and 209 form a disulfide. Residues N208 and N217 are each glycosylated (N-linked (GlcNAc...) asparagine). A helical transmembrane segment spans residues 253-271; sequence WQLTLCIVLIFTVIYFSIW. The Cytoplasmic segment spans residues 272–277; that stretch reads KGVKTS. T276 carries the phosphothreonine modification. Residues 278–297 form a helical membrane-spanning segment; that stretch reads GKVVWVTATFPYIVLSVLLV. Residues 298–324 are Extracellular-facing; it reads RGATLPGAWRGVVFYLKPNWQKLLETG. A helical transmembrane segment spans residues 325-347; it reads VWVDAAAQIFFSLGPGFGVLLAF. S336 serves as a coordination point for Na(+). Residues 348-360 lie on the Cytoplasmic side of the membrane; that stretch reads ASYNKFNNNCYQD. The helical transmembrane segment at 361–380 threads the bilayer; it reads ALVTSVVNCMTSFVSGFVIF. Na(+) is bound at residue N368. Over 381 to 421 the chain is Extracellular; it reads TVLGYMAEMRNEDVSEVAKDAGPSLLFITYAEAIANMPAST. Residues 422-443 traverse the membrane as a helical segment; the sequence is FFAIIFFLMLITLGLDSTFAGL. Positions 434, 437, and 438 each coordinate Na(+). T439 contacts serotonin. Over 444 to 463 the chain is Cytoplasmic; it reads EGVITAVLDEFPHIWAKRRE. A helical membrane pass occupies residues 464-483; sequence WFVLIVVITCVLGSLLTLTS. The Extracellular segment spans residues 484 to 494; that stretch reads GGAYVVTLLEE. Residues E494 and Y495 each contribute to the serotonin site. Residues 495 to 516 form a helical membrane-spanning segment; the sequence is YATGPAVLTVALIEAVAVSWFY. Residues 517–538 are Cytoplasmic-facing; it reads GITQFCSDVKEMLGFSPGWFWR. Residues 539–558 traverse the membrane as a helical segment; it reads ICWVAISPLFLLFIICSFLM. The serotonin site is built by F556 and S559. Residues 559–574 are Extracellular-facing; it reads SPPQLRLFQYNYPHWS. The chain crosses the membrane as a helical span at residues 575–595; the sequence is IVLGYCIGMSSVICIPTYIIY. Over 596-630 the chain is Cytoplasmic; the sequence is RLISTPGTLKERIIKSITPETPTEIPCGDIRMNAV. Residues 616-624 form an interaction with RAB4A region; that stretch reads TPTEIPCGD.

Belongs to the sodium:neurotransmitter symporter (SNF) (TC 2.A.22) family. SLC6A4 subfamily. In terms of assembly, monomer or homooligomer. Interacts with TGFB1I1. Interacts with SEC23A, SEC24C and PATJ. Interacts with NOS1; the interaction may diminish the cell surface localization of SERT in the brain and, correspondingly, reduce serotonin reuptake. Interacts (via C-terminus) with SCAMP2; the interaction is direct and retains transporter molecules intracellularly. Interacts with filamentous actin and STX1A. Interacts (via the N-terminus) with STX1A (via the H3 domain); this interaction regulates SLC4A6 channel conductance. Interacts with ITGAV:ITGB3. Interacts (via C-terminus) with ITGB3; this interaction regulates SLC6A4 trafficking. Phosphorylation at Thr-276 increases 5-HT uptake and is required for cGMP-mediated SERT regulation. Expressed in the intestinal crypt epithelial cells and myenteric neurons of the small intestine (at protein level). Expressed in the brain.

It is found in the cell membrane. Its subcellular location is the endomembrane system. The protein resides in the endosome membrane. It localises to the synapse. The protein localises to the cell junction. It is found in the focal adhesion. Its subcellular location is the cell projection. The protein resides in the neuron projection. It carries out the reaction serotonin(out) + K(+)(in) + Na(+)(out) + H(+)(in) = serotonin(in) + K(+)(out) + Na(+)(in) + H(+)(out). Its function is as follows. Serotonin transporter that cotransports serotonin with one Na(+) ion in exchange for one K(+) ion and possibly one proton in an overall electroneutral transport cycle. Transports serotonin across the plasma membrane from the extracellular compartment to the cytosol thus limiting serotonin intercellular signaling. Essential for serotonin homeostasis in the central nervous system. In the developing somatosensory cortex, acts in glutamatergic neurons to control serotonin uptake and its trophic functions accounting for proper spatial organization of cortical neurons and elaboration of sensory circuits. In the mature cortex, acts primarily in brainstem raphe neurons to mediate serotonin uptake from the synaptic cleft back into the pre-synaptic terminal thus terminating serotonin signaling at the synapse. Modulates mucosal serotonin levels in the gastrointestinal tract through uptake and clearance of serotonin in enterocytes. Required for enteric neurogenesis and gastrointestinal reflexes. Regulates blood serotonin levels by ensuring rapid high affinity uptake of serotonin from plasma to platelets, where it is further stored in dense granules via vesicular monoamine transporters and then released upon stimulation. Mechanistically, the transport cycle starts with an outward-open conformation having Na1(+) and Cl(-) sites occupied. The binding of a second extracellular Na2(+) ion and serotonin substrate leads to structural changes to outward-occluded to inward-occluded to inward-open, where the Na2(+) ion and serotonin are released into the cytosol. Binding of intracellular K(+) ion induces conformational transitions to inward-occluded to outward-open and completes the cycle by releasing K(+) possibly together with a proton bound to Asp-98 into the extracellular compartment. Na1(+) and Cl(-) ions remain bound throughout the transport cycle. Additionally, displays serotonin-induced channel-like conductance for monovalent cations, mainly Na(+) ions. The channel activity is uncoupled from the transport cycle and may contribute to the membrane resting potential or excitability. This is Sodium-dependent serotonin transporter (Slc6a4) from Rattus norvegicus (Rat).